The chain runs to 273 residues: DNA repair protein RecO (273 aa).

The disordered stretch occupies residues 249-273; it reads GRSLTEEPELKAEQTEAEKESQRPR. The segment covering 252–273 has biased composition (basic and acidic residues); sequence LTEEPELKAEQTEAEKESQRPR.

It belongs to the RecO family.

Its function is as follows. Involved in DNA repair and RecF pathway recombination. The protein is DNA repair protein RecO of Heliobacterium modesticaldum (strain ATCC 51547 / Ice1).